A 988-amino-acid chain; its full sequence is Ubiquitin carboxyl-terminal hydrolase 36 (988 aa).

Residues 16–55 (PTLRTDNNGARKQAEHPNNQSHHNHPHPTSNPNELPKPKR) are disordered. Over residues 31–48 (HPNNQSHHNHPHPTSNPN) the composition is skewed to low complexity. The USP domain maps to 78 to 386 (TGMINVGNTC…NAYIMFFELD (309 aa)). Catalysis depends on cysteine 87, which acts as the Nucleophile. Histidine 345 (proton acceptor) is an active-site residue. 3 disordered regions span residues 393–422 (PPANRPNGVRLTNGHSTTPVPAATVSSPSP), 483–782 (ATSA…VTSN), and 868–988 (EQRQ…QQQT). Low complexity-rich tracts occupy residues 408–422 (STTPVPAATVSSPSP) and 490–509 (NGNKSSSPSSNSSSNHKSIN). Phosphoserine occurs at positions 419 and 421. The span at 532–544 (TTAQLPSMPNMTE) shows a compositional bias: polar residues. A phosphothreonine mark is found at threonine 561 and threonine 565. Serine 575 and serine 577 each carry phosphoserine. A compositionally biased stretch (acidic residues) spans 592-601 (EGEDFSESDQ). The segment covering 602–631 (ESGQTNGHSKTNGSLTNGSASSSVHVNNSK) has biased composition (polar residues). The segment covering 632–649 (QKTDAIDEIFKSLKKSAD) has biased composition (basic and acidic residues). At serine 650 the chain carries Phosphoserine. Acidic residues predominate over residues 650-659 (SEEDDDEEEP). Residues 669 to 679 (PQKQSQSQSKA) are compositionally biased toward low complexity. A compositionally biased stretch (pro residues) spans 680-689 (PPSPKTPPSP). Serine 682 carries the post-translational modification Phosphoserine. Phosphothreonine is present on threonine 685. Position 688 is a phosphoserine (serine 688). Positions 707–717 (VDAIDDDDDAV) are enriched in acidic residues. A Phosphothreonine modification is found at threonine 728. Polar residues predominate over residues 735–747 (NPFSSSKPSTDSP). Serine 746 bears the Phosphoserine mark. Threonine 749 is subject to Phosphothreonine. Polar residues predominate over residues 762–782 (ALKSHQQPRVGNGYQSNVTSN). Low complexity-rich tracts occupy residues 892-903 (SGSAKGNNASNS) and 930-943 (RFHNQNYRQNFQQR).

The protein belongs to the peptidase C19 family. In terms of assembly, interacts with atms/PAF1, but not with CycT.

Its subcellular location is the nucleus. It localises to the nucleolus. The catalysed reaction is Thiol-dependent hydrolysis of ester, thioester, amide, peptide and isopeptide bonds formed by the C-terminal Gly of ubiquitin (a 76-residue protein attached to proteins as an intracellular targeting signal).. Required for maintaining multiple types of adult stem cells, including male and female germline, epithelial follicle cell and intestinal stem cells. May function as a transcriptional repressor by continually deubiquiting histone H2B at the promoters of genes critical for cellular differentiation, thereby preventing histone H3 'Lys-4' trimethylation (H3K4). Controls selective autophagy activation by ubiquitinated proteins. This Drosophila simulans (Fruit fly) protein is Ubiquitin carboxyl-terminal hydrolase 36 (Usp36).